The sequence spans 110 residues: Insulin (110 aa).

The signal sequence occupies residues 1–24 (MALWMRLLPLLALLALWGPDPAAA). Intrachain disulfides connect C31-C96, C43-C109, and C95-C100. The propeptide at 57–87 (EAEDLQVGQVELGGGPGAGSLQPLALEGSLQ) is c peptide.

Belongs to the insulin family. Heterodimer of a B chain and an A chain linked by two disulfide bonds.

It is found in the secreted. Its function is as follows. Insulin decreases blood glucose concentration. It increases cell permeability to monosaccharides, amino acids and fatty acids. It accelerates glycolysis, the pentose phosphate cycle, and glycogen synthesis in liver. The protein is Insulin (INS) of Gorilla gorilla gorilla (Western lowland gorilla).